The primary structure comprises 267 residues: Ribosomal RNA small subunit methyltransferase A (267 aa).

S-adenosyl-L-methionine contacts are provided by N13, L15, G39, E59, D87, and N106.

This sequence belongs to the class I-like SAM-binding methyltransferase superfamily. rRNA adenine N(6)-methyltransferase family. RsmA subfamily.

The protein localises to the cytoplasm. It catalyses the reaction adenosine(1518)/adenosine(1519) in 16S rRNA + 4 S-adenosyl-L-methionine = N(6)-dimethyladenosine(1518)/N(6)-dimethyladenosine(1519) in 16S rRNA + 4 S-adenosyl-L-homocysteine + 4 H(+). In terms of biological role, specifically dimethylates two adjacent adenosines (A1518 and A1519) in the loop of a conserved hairpin near the 3'-end of 16S rRNA in the 30S particle. May play a critical role in biogenesis of 30S subunits. This is Ribosomal RNA small subunit methyltransferase A from Sulfurimonas denitrificans (strain ATCC 33889 / DSM 1251) (Thiomicrospira denitrificans (strain ATCC 33889 / DSM 1251)).